The following is a 230-amino-acid chain: uncharacterized protein (230 aa).

Positions 2–69 (HRLAKIISNA…KPRLWIYYKP (68 aa)) constitute an S4 RNA-binding domain. Asp-102 (nucleophile) is an active-site residue.

This sequence belongs to the pseudouridine synthase RsuA family.

It catalyses the reaction a uridine in RNA = a pseudouridine in RNA. This is an uncharacterized protein from Rickettsia conorii (strain ATCC VR-613 / Malish 7).